The following is a 292-amino-acid chain: ATP synthase gamma chain (292 aa).

Belongs to the ATPase gamma chain family. In terms of assembly, F-type ATPases have 2 components, CF(1) - the catalytic core - and CF(0) - the membrane proton channel. CF(1) has five subunits: alpha(3), beta(3), gamma(1), delta(1), epsilon(1). CF(0) has three main subunits: a, b and c.

The protein resides in the cell inner membrane. Produces ATP from ADP in the presence of a proton gradient across the membrane. The gamma chain is believed to be important in regulating ATPase activity and the flow of protons through the CF(0) complex. In Nitrobacter winogradskyi (strain ATCC 25391 / DSM 10237 / CIP 104748 / NCIMB 11846 / Nb-255), this protein is ATP synthase gamma chain.